We begin with the raw amino-acid sequence, 487 residues long: Cytochrome P450 2C4 (487 aa).

Residue Cys432 coordinates heme.

The protein belongs to the cytochrome P450 family. Requires heme as cofactor.

Its subcellular location is the endoplasmic reticulum membrane. It localises to the microsome membrane. The enzyme catalyses an organic molecule + reduced [NADPH--hemoprotein reductase] + O2 = an alcohol + oxidized [NADPH--hemoprotein reductase] + H2O + H(+). In terms of biological role, cytochromes P450 are a group of heme-thiolate monooxygenases. In liver microsomes, this enzyme is involved in an NADPH-dependent electron transport pathway. It oxidizes a variety of structurally unrelated compounds, including steroids, fatty acids, and xenobiotics. The protein is Cytochrome P450 2C4 (CYP2C4) of Oryctolagus cuniculus (Rabbit).